Here is a 148-residue protein sequence, read N- to C-terminus: Large-conductance mechanosensitive channel (148 aa).

2 helical membrane-spanning segments follow: residues 16–36 and 89–109; these read VMDL…VNSI and GSFI…FLMV.

It belongs to the MscL family. Homopentamer.

The protein resides in the cell inner membrane. Channel that opens in response to stretch forces in the membrane lipid bilayer. May participate in the regulation of osmotic pressure changes within the cell. This Paraburkholderia phytofirmans (strain DSM 17436 / LMG 22146 / PsJN) (Burkholderia phytofirmans) protein is Large-conductance mechanosensitive channel.